The primary structure comprises 517 residues: Mitochondrial division protein fszA (517 aa).

GTP is bound by residues 60 to 64, 147 to 149, Glu-178, Arg-182, and Asp-225; these read GGGCN and GTG. The tract at residues 496–517 is disordered; sequence FTNGNNNKPYNNNKNTPGSNYE. Positions 497–517 are enriched in low complexity; the sequence is TNGNNNKPYNNNKNTPGSNYE.

This sequence belongs to the FtsZ family.

The protein resides in the mitochondrion matrix. Probably involved in mitochondrion division process. When overexpressed, induces mitochondrial tubule formation. Binds to and hydrolyzes GTP. This chain is Mitochondrial division protein fszA (fszA), found in Dictyostelium discoideum (Social amoeba).